Reading from the N-terminus, the 443-residue chain is ATP-dependent protease ATPase subunit HslU (443 aa).

Residues isoleucine 18, 60 to 65 (GVGKTE), aspartate 256, glutamate 321, and arginine 393 contribute to the ATP site.

It belongs to the ClpX chaperone family. HslU subfamily. A double ring-shaped homohexamer of HslV is capped on each side by a ring-shaped HslU homohexamer. The assembly of the HslU/HslV complex is dependent on binding of ATP.

Its subcellular location is the cytoplasm. In terms of biological role, ATPase subunit of a proteasome-like degradation complex; this subunit has chaperone activity. The binding of ATP and its subsequent hydrolysis by HslU are essential for unfolding of protein substrates subsequently hydrolyzed by HslV. HslU recognizes the N-terminal part of its protein substrates and unfolds these before they are guided to HslV for hydrolysis. This is ATP-dependent protease ATPase subunit HslU from Edwardsiella ictaluri (strain 93-146).